The sequence spans 1200 residues: uncharacterized protein (1200 aa).

Disordered stretches follow at residues 282 to 302, 323 to 372, 392 to 491, 510 to 568, and 1056 to 1200; these read SQES…GCTS, LSEA…PQGS, SQEP…KASL, RAKS…RIGA, and SCPE…LASL. Residues 420 to 435 are compositionally biased toward low complexity; it reads ASSPRLSPASPAAAAS. The span at 437–448 shows a compositional bias: basic and acidic residues; that stretch reads TKIEVKTKERNG. A compositionally biased stretch (polar residues) spans 518–527; sequence GTTQTKTSGP. Positions 1137–1153 are enriched in basic and acidic residues; that stretch reads EDGKGSHKLPDPAREHL. Low complexity predominate over residues 1160-1171; that stretch reads RQQPPRQSQVPR. Positions 1175-1200 are enriched in polar residues; the sequence is GSFSSEGTDSQTSLEDSPQTSPLASL.

This is an uncharacterized protein from Homo sapiens (Human).